Consider the following 155-residue polypeptide: GLWFGPRIGKRSLRMATEDNRQAFFKLLEAADALKYYYDQLPYEMQADEPETRVTKKVIFTPKLGRSLAYDDKVFENVEFTPRLGRRLADDMPATPADQEMYRPDPEQIDSRTKYFSPRLGRTMNFSPRLGRELAYEMVPSKIRVVRSTNKTQST.

I8 bears the Isoleucine amide mark. Positions 12–55 are excised as a propeptide; sequence SLRMATEDNRQAFFKLLEAADALKYYYDQLPYEMQADEPETRVT. 4 positions are modified to leucine amide: L64, L84, L120, and L130. A propeptide spanning residues 133–155 is cleaved from the precursor; it reads ELAYEMVPSKIRVVRSTNKTQST.

It belongs to the pyrokinin family.

The protein localises to the secreted. A hormone that controls sex pheromone production in females and pheromone responsiveness in male. Also mediates visceral muscle contractile activity (myotropic activity). This Mamestra brassicae (Cabbage moth) protein is PBAN-type neuropeptides (PBAN).